The following is a 486-amino-acid chain: Sensor protein PhoQ (486 aa).

Residues 1 to 16 are Cytoplasmic-facing; sequence MKKLLHLFFPLSLRVR. A helical membrane pass occupies residues 17 to 37; it reads FLLATAAVVLVLSLAYGMVAL. Over 38 to 194 the chain is Periplasmic; it reads IGYSVSFDKT…LKSSYMVWSW (157 aa). A divalent metal cation-binding residues include Asp151 and Asp152. Residues 195–215 form a helical membrane-spanning segment; the sequence is FIYVLSANLLLVIPLLWVAAW. The HAMP domain maps to 215–266; that stretch reads WWSLRPIEALAKEVRELEEHNRELLNPATTRELTSLVRNLNRLLKSERERYD. At 216–486 the chain is on the cytoplasmic side; the sequence is WSLRPIEALA…GRQHSTPKDE (271 aa). The 207-residue stretch at 274-480 folds into the Histidine kinase domain; that stretch reads DLTHSLKTPL…RMEVIFGRQH (207 aa). Residue His277 is modified to Phosphohistidine; by autocatalysis. Asn385 serves as a coordination point for Mg(2+). Residues 385 to 393, 415 to 420, and 434 to 446 contribute to the ATP site; these read NVLDNACKY, DDGPGI, and RVDT…GVGL. Position 442 (Gln442) interacts with Mg(2+).

In terms of assembly, homodimer.

The protein resides in the cell inner membrane. It carries out the reaction ATP + protein L-histidine = ADP + protein N-phospho-L-histidine.. Functionally, member of the two-component regulatory system PhoP/PhoQ involved in virulence, adaptation to low Mg(2+) environments and the control of acid resistance genes. In low periplasmic Mg(2+), PhoQ functions as a membrane-associated protein kinase that undergoes autophosphorylation and subsequently transfers the phosphate to PhoP, resulting in the expression of PhoP-activated genes (PAG) and repression of PhoP-repressed genes (PRG). In high periplasmic Mg(2+), acts as a protein phosphatase that dephosphorylates phospho-PhoP, which results in the repression of PG and may lead to expression of some PRG. The chain is Sensor protein PhoQ (phoQ) from Escherichia coli O157:H7.